The primary structure comprises 152 residues: Arginine repressor (152 aa).

This sequence belongs to the ArgR family.

Its subcellular location is the cytoplasm. The protein operates within amino-acid biosynthesis; L-arginine biosynthesis [regulation]. Regulates arginine biosynthesis genes. This is Arginine repressor from Lactiplantibacillus plantarum (strain ATCC BAA-793 / NCIMB 8826 / WCFS1) (Lactobacillus plantarum).